A 361-amino-acid polypeptide reads, in one-letter code: Putative agmatine deiminase (361 aa).

Cys354 (amidino-cysteine intermediate) is an active-site residue.

This sequence belongs to the agmatine deiminase family.

It carries out the reaction agmatine + H2O = N-carbamoylputrescine + NH4(+). The chain is Putative agmatine deiminase from Streptococcus pneumoniae (strain Taiwan19F-14).